We begin with the raw amino-acid sequence, 470 residues long: 3-isopropylmalate dehydratase large subunit (470 aa).

[4Fe-4S] cluster-binding residues include C351, C411, and C414.

It belongs to the aconitase/IPM isomerase family. LeuC type 1 subfamily. As to quaternary structure, heterodimer of LeuC and LeuD. It depends on [4Fe-4S] cluster as a cofactor.

It carries out the reaction (2R,3S)-3-isopropylmalate = (2S)-2-isopropylmalate. It functions in the pathway amino-acid biosynthesis; L-leucine biosynthesis; L-leucine from 3-methyl-2-oxobutanoate: step 2/4. Its function is as follows. Catalyzes the isomerization between 2-isopropylmalate and 3-isopropylmalate, via the formation of 2-isopropylmaleate. This Rhodopseudomonas palustris (strain BisB5) protein is 3-isopropylmalate dehydratase large subunit.